We begin with the raw amino-acid sequence, 297 residues long: Probable endonuclease 4 (297 aa).

Residues H69, H110, E145, D179, H182, H214, D227, H229, and E259 each coordinate Zn(2+).

The protein belongs to the AP endonuclease 2 family. Zn(2+) serves as cofactor.

It carries out the reaction Endonucleolytic cleavage to 5'-phosphooligonucleotide end-products.. In terms of biological role, endonuclease IV plays a role in DNA repair. It cleaves phosphodiester bonds at apurinic or apyrimidinic (AP) sites, generating a 3'-hydroxyl group and a 5'-terminal sugar phosphate. The sequence is that of Probable endonuclease 4 from Listeria innocua serovar 6a (strain ATCC BAA-680 / CLIP 11262).